Consider the following 233-residue polypeptide: Peptidyl-tRNA hydrolase (233 aa).

Residue tyrosine 14 coordinates tRNA. Histidine 19 (proton acceptor) is an active-site residue. Residues phenylalanine 64, asparagine 66, and asparagine 112 each contribute to the tRNA site. The tract at residues 187-233 (VSPRRSGTGQKGKDKPPAPAKQQATATKAEPEPDTRSALQKLMERFK) is disordered.

It belongs to the PTH family. In terms of assembly, monomer.

The protein localises to the cytoplasm. It catalyses the reaction an N-acyl-L-alpha-aminoacyl-tRNA + H2O = an N-acyl-L-amino acid + a tRNA + H(+). Functionally, hydrolyzes ribosome-free peptidyl-tRNAs (with 1 or more amino acids incorporated), which drop off the ribosome during protein synthesis, or as a result of ribosome stalling. In terms of biological role, catalyzes the release of premature peptidyl moieties from peptidyl-tRNA molecules trapped in stalled 50S ribosomal subunits, and thus maintains levels of free tRNAs and 50S ribosomes. In Roseobacter denitrificans (strain ATCC 33942 / OCh 114) (Erythrobacter sp. (strain OCh 114)), this protein is Peptidyl-tRNA hydrolase.